The primary structure comprises 508 residues: Photosystem II CP47 reaction center protein (508 aa).

6 consecutive transmembrane segments (helical) span residues 21–36 (SVHI…WAGS), 101–115 (IVFS…IWHW), 140–156 (GIHL…FGAF), 203–218 (IAAG…FHLS), 237–252 (VLSS…AFVV), and 457–472 (SFAL…HGAR).

The protein belongs to the PsbB/PsbC family. PsbB subfamily. In terms of assembly, PSII is composed of 1 copy each of membrane proteins PsbA, PsbB, PsbC, PsbD, PsbE, PsbF, PsbH, PsbI, PsbJ, PsbK, PsbL, PsbM, PsbT, PsbX, PsbY, PsbZ, Psb30/Ycf12, at least 3 peripheral proteins of the oxygen-evolving complex and a large number of cofactors. It forms dimeric complexes. Binds multiple chlorophylls. PSII binds additional chlorophylls, carotenoids and specific lipids. is required as a cofactor.

Its subcellular location is the plastid. It localises to the chloroplast thylakoid membrane. In terms of biological role, one of the components of the core complex of photosystem II (PSII). It binds chlorophyll and helps catalyze the primary light-induced photochemical processes of PSII. PSII is a light-driven water:plastoquinone oxidoreductase, using light energy to abstract electrons from H(2)O, generating O(2) and a proton gradient subsequently used for ATP formation. This chain is Photosystem II CP47 reaction center protein, found in Glycine max (Soybean).